The following is a 203-amino-acid chain: GTP cyclohydrolase 1 (203 aa).

Cysteine 87, histidine 90, and cysteine 158 together coordinate Zn(2+).

Belongs to the GTP cyclohydrolase I family. In terms of assembly, homomer.

It carries out the reaction GTP + H2O = 7,8-dihydroneopterin 3'-triphosphate + formate + H(+). The protein operates within cofactor biosynthesis; 7,8-dihydroneopterin triphosphate biosynthesis; 7,8-dihydroneopterin triphosphate from GTP: step 1/1. This Xylella fastidiosa (strain M23) protein is GTP cyclohydrolase 1.